The sequence spans 162 residues: Sorting nexin-3 (162 aa).

Alanine 2 is subject to N-acetylalanine. Residues 27 to 151 (NFLEIDVSNP…HMFLQDEIID (125 aa)) enclose the PX domain. Arginine 43 is subject to Omega-N-methylarginine. Residues arginine 70, serine 72, lysine 95, and arginine 118 each coordinate a 1,2-diacyl-sn-glycero-3-phospho-(1D-myo-inositol-3-phosphate). Serine 72 bears the Phosphoserine mark. Residue lysine 95 forms a Glycyl lysine isopeptide (Lys-Gly) (interchain with G-Cter in SUMO2) linkage. A binds predominantly to PtdIns(P5) and weaker to PtdIns(P3) abd PtdIns(P4); involved in neurite outgrowth regulation region spans residues 147–162 (DEIIDKSYTPSKIRHA).

The protein belongs to the sorting nexin family. As to quaternary structure, interacts with VPS26A, VPS29 and VPS35; the interaction with VPS35 is direct. The association with the retromer CSC subcomplex subunits is proposed to represent a functional distinct retromer variant described as SNX3-retromer complex. Interacts with USP10 and SCNN1A. Interacts with TRFC. Interacts with SNX8; 2 molecules of SNX8 seems to associate with one molecule of SNX3. Interacts with PTPRU. Interacts with MON2 and DOP1B. In terms of processing, ubiquitinated, leading to its proteasomal degradation. Deubiquitinated by USP10.

The protein localises to the early endosome. Its subcellular location is the cytoplasmic vesicle. It is found in the phagosome. Its function is as follows. Phosphoinositide-binding protein required for multivesicular body formation. Specifically binds phosphatidylinositol 3-phosphate (PtdIns(P3)). Can also bind phosphatidylinositol 4-phosphate (PtdIns(P4)), phosphatidylinositol 5-phosphate (PtdIns(P5)) and phosphatidylinositol 3,5-biphosphate (PtdIns(3,5)P2). Plays a role in protein transport between cellular compartments. Together with RAB7A facilitates endosome membrane association of the retromer cargo-selective subcomplex (CSC/VPS). May in part act as component of the SNX3-retromer complex which mediates the retrograde endosome-to-TGN transport of WLS distinct from the SNX-BAR retromer pathway. Promotes stability and cell surface expression of epithelial sodium channel (ENAC) subunits SCNN1A and SCNN1G. Not involved in EGFR degradation. Involved in the regulation of phagocytosis in dendritic cells possibly by regulating EEA1 recruitment to the nascent phagosomes. Involved in iron homeostasis through regulation of endocytic recycling of the transferrin receptor TFRC presumably by delivering the transferrin:transferrin receptor complex to recycling endosomes; the function may involve the CSC retromer subcomplex. In the case of Salmonella enterica infection plays arole in maturation of the Salmonella-containing vacuole (SCV) and promotes recruitment of LAMP1 to SCVs. The chain is Sorting nexin-3 from Homo sapiens (Human).